The following is a 1237-amino-acid chain: Anion exchange protein 2 (1237 aa).

The segment at 1-237 is disordered; that stretch reads MSSAPRRPAS…SYNLQERRRI (237 aa). Residues 1–703 are Cytoplasmic-facing; the sequence is MSSAPRRPAS…SDFRDALDPQ (703 aa). Basic and acidic residues-rich tracts occupy residues 37-49 and 58-75; these read ELHR…RFEE and GGEE…EYHR. 2 stretches are compositionally biased toward basic residues: residues 76 to 85 and 94 to 110; these read QSSHHIHHPL and RRRK…RRRP. The residue at position 113 (Ser113) is a Phosphoserine. Over residues 122–133 the composition is skewed to acidic residues; sequence EEGEEDEEEANE. The segment covering 137–151 has biased composition (low complexity); that stretch reads ARAPTEPSPASTPSS. Residues Ser144, Ser170, and Ser172 each carry the phosphoserine modification. Over residues 206-215 the composition is skewed to gly residues; sequence TAGGDNGGAS. Ser239 carries the phosphoserine modification. Thr253 carries the phosphothreonine modification. Lys270 is modified (N6-methyllysine). The interval 281-316 is disordered; that stretch reads RRHLVRKNAKGSAQSSREGREPGPTPRSRPRAPHKP. Ser439 bears the Phosphoserine mark. Residues 445–464 are disordered; that stretch reads SLLGHHHGQGAESDPHVTEP. 4 helical membrane passes run 704 to 727, 733 to 770, 790 to 812, and 822 to 843; these read CVAA…GLLG, LIGV…LLVF, VWIG…SFLV, and IFAF…IKIF. Residues 704–1237 are membrane (anion exchange); it reads CVAAVIFIYF…DEYNEMPMPV (534 aa). The Extracellular segment spans residues 844–896; that stretch reads QEHPLHGCSVSNSSETDSSENATWAGAGSTLGPANRSSAGQAGQGRPRGQPNT. Residues Asn855, Asn864, and Asn878 are each glycosylated (N-linked (GlcNAc...) asparagine). Residues 897 to 914 traverse the membrane as a helical segment; sequence ALLSLVLMAGTFFIAFFL. Topologically, residues 915–929 are cytoplasmic; it reads RKFKNSRFFPGRIRR. 5 helical membrane-spanning segments follow: residues 930-950, 984-1006, 1032-1053, 1087-1132, and 1159-1195; these read VIGD…DYSI, PFPV…LIFM, LLLI…LAAA, VTGL…IQFY, and MHLF…TVPL. A lipid anchor (S-palmitoyl cysteine) is attached at Cys1169.

This sequence belongs to the anion exchanger (TC 2.A.31) family. As to expression, expressed in the ileum (at protein level).

It localises to the cell membrane. The protein localises to the apical cell membrane. The protein resides in the basolateral cell membrane. The catalysed reaction is hydrogencarbonate(in) + chloride(out) = hydrogencarbonate(out) + chloride(in). In terms of biological role, sodium-independent anion exchanger which mediates the electroneutral exchange of chloride for bicarbonate ions across the cell membrane. Plays an important role in osteoclast differentiation and function. Regulates bone resorption and calpain-dependent actin cytoskeleton organization in osteoclasts via anion exchange-dependent control of pH. Essential for intracellular pH regulation in CD8(+) T-cells upon CD3 stimulation, modulating CD8(+) T-cell response. The protein is Anion exchange protein 2 (SLC4A2) of Oryctolagus cuniculus (Rabbit).